A 371-amino-acid chain; its full sequence is Serine/threonine-protein kinase 17B (371 aa).

The Protein kinase domain maps to 33–293 (TLTPKELGRG…AESCLSHSWL (261 aa)). ATP contacts are provided by residues 39–47 (LGRGKFAVV) and lysine 62. The active-site Proton acceptor is aspartate 158. A disordered region spans residues 308–345 (SESSQTQDLSLRSSEDKTPKSCNGSCGDREDKENIPED). The segment covering 309–319 (ESSQTQDLSLR) has biased composition (polar residues).

It belongs to the protein kinase superfamily. CAMK Ser/Thr protein kinase family. DAP kinase subfamily. In terms of assembly, interacts with CHP1; the interaction induces CHP1 to translocate from the Golgi to the nucleus. Autophosphorylated. Highly expressed in thymus, spleen, and testis, lower levels present in the brain.

It is found in the nucleus. The protein resides in the cell membrane. Its subcellular location is the endoplasmic reticulum-Golgi intermediate compartment. It carries out the reaction L-seryl-[protein] + ATP = O-phospho-L-seryl-[protein] + ADP + H(+). It catalyses the reaction L-threonyl-[protein] + ATP = O-phospho-L-threonyl-[protein] + ADP + H(+). Functionally, acts as a positive regulator of apoptosis. Phosphorylates myosin light chains. This Rattus norvegicus (Rat) protein is Serine/threonine-protein kinase 17B (Stk17b).